Consider the following 335-residue polypeptide: E3 ubiquitin-protein ligase NLA (335 aa).

The region spanning 1 to 154 (MKFCKKYEEY…ESRQGQAFKT (154 aa)) is the SPX domain. The RING-type zinc finger occupies 231-280 (CSICLDTVFDPISLTCGHIYCYMCACSAASVNVVDGLKTAEATEKCPLCR).

Interacts with UBC8. Interacts with PHT1-1 and PHT1-4. Forms homodimers (via RING domain). Interacts with UBC24/PHO2. Interacts with NPF2.13/NRT1.7. Interacts with NAC92/ORE1. In terms of tissue distribution, high expression in roots and stems, medium in seedlings, flowers, rosette and cauline leaves, and very low in siliques. Detected in cotyledons, hypocotyls, pedicel, receptacle, pistil, sepal, filament of stamen and at the two ends of developing siliques.

The protein resides in the nucleus speckle. It is found in the nucleus. It localises to the cell membrane. It carries out the reaction S-ubiquitinyl-[E2 ubiquitin-conjugating enzyme]-L-cysteine + [acceptor protein]-L-lysine = [E2 ubiquitin-conjugating enzyme]-L-cysteine + N(6)-ubiquitinyl-[acceptor protein]-L-lysine.. It functions in the pathway protein modification; protein ubiquitination. In terms of biological role, E3 ubiquitin-protein ligase that mediates E2-dependent protein ubiquitination. Plays a role in salicylic acid-mediated negative feedback regulation of salicylic acid (SA) accumulation. May be involved in the overall regulation of SA, benzoic acid and phenylpropanoid biosynthesis. Involved in defense response. May act as negative regulator of resistance to the necrotrophic fungal pathogen Plectosphaerella cucumerina by modulating the accumulation of the phytoalexin camalexin and the salicylic acid- and jasmonate- dependent defense pathways. Controls the adaptability to nitrogen limitation by channeling the phenylpropanoid metabolic flux to the induced anthocyanin synthesis. Involved in the regulation of inorganic phosphate (Pi) homeostasis in a nitrate-dependent fashion. Directs the ubiquitination and subsequent degradation of the plasma membrane-localized inorganic phosphate transporters PHT1-1 and PHT1-4, to maintain phosphate homeostasis. The ubiquitination of PHTs triggers their clathrin-dependent endocytosis and trafficking to the vacuole through the endosomal pathway for degradation. Functions cooperatively with UBC24/PHO2 to regulate the abundance of PHT1-1, PHT1-2 and PHT1-3 in different subcellular compartments. Regulates Pi homeostasis by mediating, cooperatively with UBC24/PHO2, polyubiquitination of PHT1-4 and its targeting for degradation. Directs the polyubiquitination and subsequent degradation of the plasma membrane-localized nitrate transporter NPF2.13/NRT1.7, to help plants to adapt to nitrogen deficiency by regulating the source-to-sink remobilization of nitrate. Regulates leaf senescence during nitrogen deficiency by mediating, cooperatively with UBC24/PHO2, polyubiquitination of NAC92/ORE1 and its targeting for degradation. This is E3 ubiquitin-protein ligase NLA from Arabidopsis thaliana (Mouse-ear cress).